A 273-amino-acid polypeptide reads, in one-letter code: Undecaprenyl-diphosphatase (273 aa).

The next 7 membrane-spanning stretches (helical) occupy residues 6–26, 45–65, 90–110, 116–136, 190–210, 222–242, and 252–272; these read SLLIAAILGVVEGLTEFLPVS, AKTFEVVIQLGSILAVVVMFW, LTLIHILLGMIPAVVLGLLFH, LFNPINVMYALVVGGLLLIAA, YAASEFSFLLAVPMMMGATAL, GDIPMFAVGFITAFVVALIAI, and ISFIPFAIYRFIVAAAVYVVF.

The protein belongs to the UppP family.

Its subcellular location is the cell inner membrane. It carries out the reaction di-trans,octa-cis-undecaprenyl diphosphate + H2O = di-trans,octa-cis-undecaprenyl phosphate + phosphate + H(+). Catalyzes the dephosphorylation of undecaprenyl diphosphate (UPP). Confers resistance to bacitracin. The protein is Undecaprenyl-diphosphatase of Escherichia coli O157:H7.